The chain runs to 235 residues: Large ribosomal subunit protein uL4 (235 aa).

Positions 45-75 (RAGTASTKTRGEVSGGGRKPWPQKHTGRARH) are disordered. Positions 65 to 75 (WPQKHTGRARH) are enriched in basic residues.

It belongs to the universal ribosomal protein uL4 family. Part of the 50S ribosomal subunit.

Its function is as follows. One of the primary rRNA binding proteins, this protein initially binds near the 5'-end of the 23S rRNA. It is important during the early stages of 50S assembly. It makes multiple contacts with different domains of the 23S rRNA in the assembled 50S subunit and ribosome. Functionally, forms part of the polypeptide exit tunnel. The sequence is that of Large ribosomal subunit protein uL4 from Thermotoga petrophila (strain ATCC BAA-488 / DSM 13995 / JCM 10881 / RKU-1).